The following is a 231-amino-acid chain: tRNA1(Val) (adenine(37)-N6)-methyltransferase (231 aa).

Belongs to the methyltransferase superfamily. tRNA (adenine-N(6)-)-methyltransferase family.

The protein resides in the cytoplasm. It catalyses the reaction adenosine(37) in tRNA1(Val) + S-adenosyl-L-methionine = N(6)-methyladenosine(37) in tRNA1(Val) + S-adenosyl-L-homocysteine + H(+). Functionally, specifically methylates the adenine in position 37 of tRNA(1)(Val) (anticodon cmo5UAC). The protein is tRNA1(Val) (adenine(37)-N6)-methyltransferase of Flavobacteriaceae bacterium (strain 3519-10).